A 250-amino-acid polypeptide reads, in one-letter code: Ubiquinone/menaquinone biosynthesis C-methyltransferase UbiE (250 aa).

S-adenosyl-L-methionine-binding positions include threonine 73, aspartate 94, 122–123 (NA), and serine 139.

It belongs to the class I-like SAM-binding methyltransferase superfamily. MenG/UbiE family.

It catalyses the reaction a 2-demethylmenaquinol + S-adenosyl-L-methionine = a menaquinol + S-adenosyl-L-homocysteine + H(+). It carries out the reaction a 2-methoxy-6-(all-trans-polyprenyl)benzene-1,4-diol + S-adenosyl-L-methionine = a 5-methoxy-2-methyl-3-(all-trans-polyprenyl)benzene-1,4-diol + S-adenosyl-L-homocysteine + H(+). It participates in quinol/quinone metabolism; menaquinone biosynthesis; menaquinol from 1,4-dihydroxy-2-naphthoate: step 2/2. The protein operates within cofactor biosynthesis; ubiquinone biosynthesis. Methyltransferase required for the conversion of demethylmenaquinol (DMKH2) to menaquinol (MKH2) and the conversion of 2-polyprenyl-6-methoxy-1,4-benzoquinol (DDMQH2) to 2-polyprenyl-3-methyl-6-methoxy-1,4-benzoquinol (DMQH2). This is Ubiquinone/menaquinone biosynthesis C-methyltransferase UbiE from Francisella tularensis subsp. novicida (strain U112).